Here is a 410-residue protein sequence, read N- to C-terminus: Cysteine desulfurase IscS (410 aa).

Pyridoxal 5'-phosphate contacts are provided by residues A80–T81, N160, Q188, and S208–H210. K211 carries the N6-(pyridoxal phosphate)lysine modification. Position 248 (T248) interacts with pyridoxal 5'-phosphate. Residue C334 is the Cysteine persulfide intermediate of the active site. A [2Fe-2S] cluster-binding site is contributed by C334.

This sequence belongs to the class-V pyridoxal-phosphate-dependent aminotransferase family. NifS/IscS subfamily. Homodimer. Forms a heterotetramer with IscU, interacts with other sulfur acceptors. The cofactor is pyridoxal 5'-phosphate.

It is found in the cytoplasm. It carries out the reaction (sulfur carrier)-H + L-cysteine = (sulfur carrier)-SH + L-alanine. It functions in the pathway cofactor biosynthesis; iron-sulfur cluster biosynthesis. Its function is as follows. Master enzyme that delivers sulfur to a number of partners involved in Fe-S cluster assembly, tRNA modification or cofactor biosynthesis. Catalyzes the removal of elemental sulfur atoms from cysteine to produce alanine. Functions as a sulfur delivery protein for Fe-S cluster synthesis onto IscU, an Fe-S scaffold assembly protein, as well as other S acceptor proteins. The polypeptide is Cysteine desulfurase IscS (Rickettsia africae (strain ESF-5)).